Consider the following 1272-residue polypeptide: MDLFDFFRDWDLEQQCHYEQDRSALKKREWERRNQEVQQEEDLFSSGFDLFGEPYKTNKGDALANRVQNTLGNYDEMKDLLTNHSNQNHLVGIPKNSVPQNPNNKNEPSFFPEQKNRIIPPHQDNTHPSAPMPPPSVVILNSTLIHSNRKSKPEWSRDSHNPSTVLASQASGQPNKMQTLTQDQSQARLEDFFVYPAEQPQIGEVEESNPSAKEDSNPKSSGEDAFKEIFQSNSPEESEFAVQAPGSPLVASSLLAPSSGLSVQNFPPGLYCKTSMGQQKPTAYVRPMDGQDQAPDISPTLKPSIEFENSFGNLSFGTLLDGKPSAASSKTKLPKFTILQTSEVSLPSDPSCVEEILRESQHLTPGFTLQKWNDPTTRASTKMLEDDLKLSSDEDDLEPVKTLTTQCTATELYQAVEKAKPRNNPVNPPLATPQPPPAVQASGGSGSSSESESSSESDSDTESSTTDSESNEAPRVATPEPEPPSTNKWQLDKWLNKVTSQNKSFICGQNETPMETISLPPPIIQPMEVQMKVKTNASQVPAEPKERPLLSLIREKARPRPTQKIPETKALKHKLSTTSETVSQRTIGKKQPKKVEKNTSIDEFTWPKPNITSSTPKEKESVELHDPPRGRNKATAHKPAPRKEPRPNIPLAPEKKKYRGPGKIVPKSREFIETDSSTSDSNTDQEETLQIKVLPPCIISGGNTAKSKEICGASLTLSTLMNSSGSNNNLSISNEEPTFSPIPVMQTEMLSPLRDHENLKNLWVKIDLDLLSRVPGHNSLHAAPAKPDHKETATKPKRQTAVTAVEKPAPKGKRKHKPTEVAEKIPEKKQRLEEATTICLLPPCISPAPPHKPPNTRENNSSRRANRRKEEKLFPPPLSPLPEDPPRRRNVSGNNGPFGQDKNIAMTGQITSTKPKRNEGKFCATFKGISVNEGDTPKKASSATMTITNTAVATATVTATAIVTTTVTATATATATTTTTTTTISTITSTITTGLMDSSHLEMTSWAALPLLSSSSTNVRRPKLTFDDSVHNADYYMQEAKKLKHKADALFEKFGKAVNYADAALSFTECGNAMERDPLEAKSPYTMYSETVELLRYAMRLKNFASPLASDGDKKLAVLCYRCLSLLYLRMFKLKKDHAMKYSRSLMEYFKQNASKVAQIPSPWVGNGKNTPSPVSLNNVSPINAMGNCNNGPVTIPQRIHHMAASHVNITSNVLRGYEHWDMADKLTRENKEFFGDLDTLMGPLTQHSSMTNLVRYVRQGLCWLRIDAHLL.

2 disordered regions span residues Ile93 to Asp183 and Pro200 to Glu223. Residues Ser97–Glu107 show a composition bias toward polar residues. Positions Ser151–His160 are enriched in basic and acidic residues. The segment covering Asn161 to Asp183 has biased composition (polar residues). Over residues Ala212–Glu223 the composition is skewed to basic and acidic residues. Ser391 is subject to Phosphoserine. Disordered regions lie at residues Lys418–Leu491, Thr535–Glu687, Ser779–Lys829, and Pro842–Asn903. A compositionally biased stretch (pro residues) spans Val426 to Ala438. The span at Val439–Glu452 shows a compositional bias: low complexity. Thr478 bears the Phosphothreonine mark. Basic and acidic residues predominate over residues Glu543–Arg558. Over residues Ser576–Thr586 the composition is skewed to polar residues. Over residues Pro616–Arg629 the composition is skewed to basic and acidic residues. Positions Gly630 to Ala640 are enriched in basic residues. Residues Pro818 to Lys829 are compositionally biased toward basic and acidic residues. Pro residues-rich tracts occupy residues Cys844 to Pro853 and Phe874 to Glu883.

The protein belongs to the AF4 family.

It is found in the nucleus speckle. Its function is as follows. RNA-binding protein. Might be involved in alternative splicing regulation through an interaction with G-quartet RNA structure. The sequence is that of AF4/FMR2 family member 2 (AFF2) from Pongo pygmaeus (Bornean orangutan).